A 359-amino-acid chain; its full sequence is 3-dehydroquinate synthase (359 aa).

NAD(+) is bound by residues 71–76 (DGEAHK), 105–109 (GVIGD), 129–130 (TT), lysine 142, lysine 151, and 169–172 (TLHT). 3 residues coordinate Zn(2+): glutamate 184, histidine 247, and histidine 264.

Belongs to the sugar phosphate cyclases superfamily. Dehydroquinate synthase family. NAD(+) serves as cofactor. Requires Co(2+) as cofactor. The cofactor is Zn(2+).

It is found in the cytoplasm. The enzyme catalyses 7-phospho-2-dehydro-3-deoxy-D-arabino-heptonate = 3-dehydroquinate + phosphate. Its pathway is metabolic intermediate biosynthesis; chorismate biosynthesis; chorismate from D-erythrose 4-phosphate and phosphoenolpyruvate: step 2/7. Catalyzes the conversion of 3-deoxy-D-arabino-heptulosonate 7-phosphate (DAHP) to dehydroquinate (DHQ). This Neisseria meningitidis serogroup A / serotype 4A (strain DSM 15465 / Z2491) protein is 3-dehydroquinate synthase.